A 200-amino-acid polypeptide reads, in one-letter code: DNA dC-&gt;dU-editing enzyme APOBEC-3H (200 aa).

The 123-residue stretch at 4–126 (LTAETFRLQF…KPQQKGLRLL (123 aa)) folds into the CMP/dCMP-type deaminase domain. A Zn(2+)-binding site is contributed by H54. Catalysis depends on E56, which acts as the Proton donor. Zn(2+) is bound by residues C85 and C88. The stretch at 160 to 182 (YKMLEELDKNSRAIKRRLERIKI) forms a coiled coil.

It belongs to the cytidine and deoxycytidylate deaminase family. Homodimer. Interacts with AGO1, AGO2 and AGO3. Requires Zn(2+) as cofactor. Post-translationally, (Microbial infection) Following infection by some HIV-1 strains, such as isolate BRU/LAI, can be ubiquitinated by a cullin-5-RING E3 ubiquitin-protein ligase complex (ECS complex) hijacked by the HIV-1 Vif protein, leading to its degradation. Ubiquitination by the ECS complex is however less efficent compared to APOBEC3G or APOBEC3G. Expressed in lymphoid organs. Also detected in non-lymphoid tissues including lung, testis, ovary, fetal liver and skin.

The protein resides in the cytoplasm. The protein localises to the nucleus. Its subcellular location is the P-body. The enzyme catalyses a 2'-deoxycytidine in single-stranded DNA + H2O + H(+) = a 2'-deoxyuridine in single-stranded DNA + NH4(+). Its activity is regulated as follows. APOBEC3H activity is regulated by RNA. While RNA-binding inhibits the DNA deaminase activity, double-stranded RNA is required for HIV-1 restriction by promoting APOBEC3H homodimerization and packaging into retroviral nucleocapsids. (Microbial infection) Antiviral activity is inhibited to some extent by the HIV-1 virion infectivity factor (VIF), that prevents its incorporation into progeny virions by both inhibiting its translation and/or by inducing its ubiquitination and subsequent degradation by the 26S proteasome. DNA deaminase (cytidine deaminase) which acts as an inhibitor of retrovirus replication and retrotransposon mobility via deaminase-dependent and -independent mechanisms. The A3H-var/haplotype 2 exhibits antiviral activity against vif-deficient HIV-1. After the penetration of retroviral nucleocapsids into target cells of infection and the initiation of reverse transcription, it can induce the conversion of cytosine to uracil in the minus-sense single-strand viral DNA, leading to G-to-A hypermutations in the subsequent plus-strand viral DNA. The resultant detrimental levels of mutations in the proviral genome, along with a deamination-independent mechanism that works prior to the proviral integration, together exert efficient antiretroviral effects in infected target cells. Selectively targets single-stranded DNA and does not deaminate double-stranded DNA or single- or double-stranded RNA. Exhibits antiviral activity also against T-cell leukemia virus type 1 (HTLV-1) and may inhibit the mobility of LTR and non-LTR retrotransposons. The polypeptide is DNA dC-&gt;dU-editing enzyme APOBEC-3H (Homo sapiens (Human)).